The chain runs to 1139 residues: Solute carrier family 12 member 5 (1139 aa).

Disordered stretches follow at residues 1 to 63 (MSRR…GKEY) and 92 to 116 (TNLP…KPVQ). Topologically, residues 1 to 98 (MSRRFTVTSL…ANYTNLPQGS (98 aa)) are cytoplasmic. The segment covering 19–45 (PDPESRRHSVADPRHLPGEDVKGDGNP) has biased composition (basic and acidic residues). Residues 46-55 (KESSPFINST) show a composition bias toward polar residues. Residue Thr57 is modified to Phosphothreonine. The segment covering 98 to 111 (SREHEEAENNEGGK) has biased composition (basic and acidic residues). Residues 99-120 (REHEEAENNEGGKKKPVQAPRM) traverse the membrane as a discontinuously helical segment. Lys113 contacts K(+). The Extracellular portion of the chain corresponds to 121–129 (GTFMGVYLP). A helical transmembrane segment spans residues 130-151 (CLQNIFGVILFLRLTWVVGIAG). Residues 152–174 (IMESFCMVFICCSCTMLTAISMS) lie on the Cytoplasmic side of the membrane. Residues 175–203 (AIATNGVVPAGGSYYMISRSLGPEFGGAV) traverse the membrane as a helical segment. Chloride is bound at residue Ala184. The Extracellular segment spans residues 204–229 (GLCFYLGTTFAGAMYILGTIEILLAY). A run of 2 helical transmembrane segments spans residues 230–250 (LFPA…AAML) and 251–276 (NNMR…KYVN). Topologically, residues 277–402 (KFALVFLGCV…ERSGMTSVGL (126 aa)) are extracellular. A disulfide bridge links Cys310 with Cys325. N-linked (GlcNAc...) asparagine glycans are attached at residues Asn314, Asn333, Asn351, and Asn362. A disulfide bridge connects residues Cys345 and Cys354. The chain crosses the membrane as a helical span at residues 403–420 (ADGTPIDMDHPYVFSDMT). Residue Met410 participates in K(+) binding. Residues Tyr414 and Val415 each coordinate chloride. Over 421–429 (SYFTLLVGI) the chain is Cytoplasmic. A helical membrane pass occupies residues 430–453 (YFPSVTGIMAGSNRSGDLRDAQKS). Position 446 (Asp446) interacts with K(+). Topologically, residues 454–485 (IPTGTILAIATTSAVYISSVVLFGACIEGVVL) are extracellular. The helical transmembrane segment at 486–513 (RDKFGEAVNGNLVVGTLAWPSPWVIVIG) threads the bilayer. Topologically, residues 514-534 (SFFSTCGAGLQSLTGAPRLLQ) are cytoplasmic. Helical transmembrane passes span 535-555 (AISR…KANG) and 556-578 (EPTW…ASLD). Glu569 contributes to the chloride binding site. Residues 579–592 (EVAPILSMFFLMCY) are Cytoplasmic-facing. 2 helical membrane-spanning segments follow: residues 593–615 (MFVN…PRFR) and 616–632 (YYHW…CLAL). Over 633-1139 (MFICSWYYAL…GGREVITIYS (507 aa)) the chain is Cytoplasmic. Positions 667 to 681 (GIRGLSLSAARYALL) are scissor helix. Thr929 carries the post-translational modification Phosphothreonine; by OXSR1 and STK39. The segment at 942 to 1052 (MHLTKNERER…GPSPVSSEGI (111 aa)) is disordered. Positions 945–962 (TKNEREREIQSITDESRG) are enriched in basic and acidic residues. The segment covering 982–994 (TAGDSEEKPEEEV) has biased composition (acidic residues). Positions 1003–1012 (PSCPSSSPSP) are enriched in low complexity. Over residues 1023-1042 (DPEKVHLTWTKDKSVAEKNK) the composition is skewed to basic and acidic residues. Phosphothreonine; by OXSR1 and STK39 is present on Thr1030. 3 positions are modified to phosphoserine: Ser1045, Ser1048, and Ser1049.

It belongs to the SLC12A transporter family. K/Cl co-transporter subfamily. Homodimer; adopts a domain-swap conformation at the scissor helices connecting the transmembrane domain and C-terminal domain. Heterodimer with K-Cl cotransporters SLC12A6 and SLC12A7. Interacts with AP2A1. Post-translationally, phosphorylated at Thr-929 and Thr-1030 by OXSR1/OSR1 and STK39/SPAK downstream of WNK kinases (WNK1, WNK2, WNK3 or WNK4), inhibiting the potassium-chloride cotransport activity. In terms of tissue distribution, brain specific. Detected in neuronal cells.

It is found in the cell membrane. The protein localises to the cell projection. The protein resides in the dendrite. It catalyses the reaction K(+)(in) + chloride(in) = K(+)(out) + chloride(out). Inhibited following phosphorylation by OXSR1/OSR1 and STK39/SPAK: phosphorylation takes place downstream of WNK kinases (WNK1, WNK2, WNK3 or WNK4) in response to hyperosmotic stress and subsequent cell shrinkage. In terms of biological role, mediates electroneutral potassium-chloride cotransport in mature neurons and is required for neuronal Cl(-) homeostasis. As major extruder of intracellular chloride, it establishes the low neuronal Cl(-) levels required for chloride influx after binding of GABA-A and glycine to their receptors, with subsequent hyperpolarization and neuronal inhibition. Involved in the regulation of dendritic spine formation and maturation. The chain is Solute carrier family 12 member 5 from Homo sapiens (Human).